We begin with the raw amino-acid sequence, 649 residues long: Choline transporter-like protein 3 (649 aa).

The helical transmembrane segment at 33–53 threads the bilayer; it reads AWLFLFFLFWTGLVFIMGYSV. Asparagine 136 and asparagine 151 each carry an N-linked (GlcNAc...) asparagine glycan. 5 helical membrane passes run 213-233, 235-255, 284-304, 334-354, and 384-404; these read DTVLGLCILAFALSLAMMFTF, FITTLLVHIFIALIVLGLLFV, LLGFAIVSTVITAVLLILIYV, LWTFAILIFFWVLWVAVLLSL, and LIGLIWTSEFILACQQMAVAG. 3 N-linked (GlcNAc...) asparagine glycosylation sites follow: asparagine 414, asparagine 502, and asparagine 520. 2 helical membrane passes run 533–553 and 562–582; these read FIIFLGKVLVVCFTVFGGLMA and VWAVPLLLVAFFAYLVAHSFL.

The protein belongs to the CTL (choline transporter-like) family.

The protein localises to the membrane. The chain is Choline transporter-like protein 3 (SLC44A3) from Bos taurus (Bovine).